The following is a 331-amino-acid chain: Protein RecA (331 aa).

66–73 (GPESSGKT) serves as a coordination point for ATP.

The protein belongs to the RecA family.

It localises to the cytoplasm. In terms of biological role, can catalyze the hydrolysis of ATP in the presence of single-stranded DNA, the ATP-dependent uptake of single-stranded DNA by duplex DNA, and the ATP-dependent hybridization of homologous single-stranded DNAs. It interacts with LexA causing its activation and leading to its autocatalytic cleavage. The sequence is that of Protein RecA from Acholeplasma laidlawii.